The following is a 157-amino-acid chain: UPF0225 protein Psyr_3863 (157 aa).

Belongs to the UPF0225 family.

This chain is UPF0225 protein Psyr_3863, found in Pseudomonas syringae pv. syringae (strain B728a).